We begin with the raw amino-acid sequence, 394 residues long: MKVLCFGMGQAGGNVLDALLRYEQRTNADYVVDAVAYNTASADLRGLDLVPEENRILFGADEVSGHGVGADNELAAELAERDSRQLLRGTDGAPTSTADAFLIFAGLGGGTGSGAAPVLAKHLNRIYEQPIYGVGILPAADEGALYSRNAARSLKALVDVTDHVFAFDNGAWAESGEDVAQAHDTMNEVLVRRLGILFASGEVAESGTVAESVVDSSEVINTLRGGGISTIGYAASELPESDGGGGFSIKGLLGGDSSSTDELDSINRITTQTRKAVLGQLTLPCDVDSASRGLVVVSGPPEWLNRKAVERSRTWVEEQTGSMEVRGGDYPLSESNHVGVLVLLGDVSRSDRVAEIRSTAVEAEQNRRERIASDAADREDGTEAVVDDRLDSLF.

GTP contacts are provided by residues 10-14 (QAGGN), 110-112 (GTG), Glu142, Asn169, and Asn187.

It belongs to the CetZ family.

It localises to the cytoplasm. Involved in cell shape control. This chain is Tubulin-like protein CetZ5, found in Haloferax volcanii (strain ATCC 29605 / DSM 3757 / JCM 8879 / NBRC 14742 / NCIMB 2012 / VKM B-1768 / DS2) (Halobacterium volcanii).